A 114-amino-acid polypeptide reads, in one-letter code: NADH-ubiquinone oxidoreductase chain 3 (114 aa).

The next 3 membrane-spanning stretches (helical) occupy residues 3 to 23 (ATIL…SFWL), 54 to 74 (FFLI…LLPF), and 85 to 105 (IVIL…IYEW).

It belongs to the complex I subunit 3 family.

The protein localises to the mitochondrion membrane. The enzyme catalyses a ubiquinone + NADH + 5 H(+)(in) = a ubiquinol + NAD(+) + 4 H(+)(out). Core subunit of the mitochondrial membrane respiratory chain NADH dehydrogenase (Complex I) that is believed to belong to the minimal assembly required for catalysis. Complex I functions in the transfer of electrons from NADH to the respiratory chain. The immediate electron acceptor for the enzyme is believed to be ubiquinone. The protein is NADH-ubiquinone oxidoreductase chain 3 (mt-nd3) of Xenopus laevis (African clawed frog).